A 247-amino-acid polypeptide reads, in one-letter code: Proteasome subunit alpha type-7-B (247 aa).

It belongs to the peptidase T1A family. The 26S proteasome consists of a 20S proteasome core and two 19S regulatory subunits. The 20S proteasome core is composed of 28 subunits that are arranged in four stacked rings, resulting in a barrel-shaped structure. The two end rings are each formed by seven alpha subunits, and the two central rings are each formed by seven beta subunits. The catalytic chamber with the active sites is on the inside of the barrel. Phosphorylated in G2 phase.

The protein localises to the cytoplasm. The protein resides in the nucleus. The proteasome is a multicatalytic proteinase complex which is characterized by its ability to cleave peptides with Arg, Phe, Tyr, Leu, and Glu adjacent to the leaving group at neutral or slightly basic pH. The proteasome has an ATP-dependent proteolytic activity. This Xenopus laevis (African clawed frog) protein is Proteasome subunit alpha type-7-B (psma7-b).